The primary structure comprises 155 residues: Microsomal glutathione S-transferase 1 (155 aa).

Over 3-9 (NLSQLME) the chain is Lumenal. Residues 10–33 (NEVFMAFASYTTIVLSKMNFMSTA) traverse the membrane as a helical segment. At 34 to 62 (TAFYRLTKKVFANPEDCAGFGKGENAKKY) the chain is on the cytoplasmic side. Arginine 38 contributes to the glutathione binding site. N6-acetyllysine occurs at positions 42, 55, and 60. The chain crosses the membrane as a helical span at residues 63–96 (LRTDDRVERVRRAHLNDLENIVPFLGIGLLYSLS). The glutathione site is built by arginine 73, arginine 74, histidine 76, and glutamate 81. At 97-99 (GPD) the chain is on the lumenal side. Residues 100 to 123 (LSTAILHFRLFVRARIYHTIAYLT) traverse the membrane as a helical segment. Tyrosine 121 lines the glutathione pocket. The Cytoplasmic portion of the chain corresponds to 124-128 (PLPQP). The helical transmembrane segment at 129 to 148 (NRALAFFIGYGVTLSMAYRL) threads the bilayer. At 149 to 155 (LKSKLYL) the chain is on the lumenal side.

It belongs to the MAPEG family. As to quaternary structure, homotrimer; The trimer binds only one molecule of glutathione.

The protein localises to the endoplasmic reticulum membrane. It localises to the mitochondrion outer membrane. The enzyme catalyses RX + glutathione = an S-substituted glutathione + a halide anion + H(+). Conjugation of reduced glutathione to a wide number of exogenous and endogenous hydrophobic electrophiles. This chain is Microsomal glutathione S-transferase 1 (MGST1), found in Bos taurus (Bovine).